The chain runs to 419 residues: UDP-N-acetylglucosamine 1-carboxyvinyltransferase (419 aa).

Phosphoenolpyruvate is bound at residue 22 to 23 (KN). Arginine 95 lines the UDP-N-acetyl-alpha-D-glucosamine pocket. Cysteine 119 (proton donor) is an active-site residue. Cysteine 119 is subject to 2-(S-cysteinyl)pyruvic acid O-phosphothioketal. UDP-N-acetyl-alpha-D-glucosamine-binding positions include 164–167 (KVSV), aspartate 308, and isoleucine 330.

It belongs to the EPSP synthase family. MurA subfamily.

It localises to the cytoplasm. The enzyme catalyses phosphoenolpyruvate + UDP-N-acetyl-alpha-D-glucosamine = UDP-N-acetyl-3-O-(1-carboxyvinyl)-alpha-D-glucosamine + phosphate. Its pathway is cell wall biogenesis; peptidoglycan biosynthesis. In terms of biological role, cell wall formation. Adds enolpyruvyl to UDP-N-acetylglucosamine. The sequence is that of UDP-N-acetylglucosamine 1-carboxyvinyltransferase from Rickettsia conorii (strain ATCC VR-613 / Malish 7).